The chain runs to 364 residues: MQERHTEQDYRALLIADTPIIDVRAPIEFEHGAMPAAINLPLMNNDERAAVGTCYKQQGSDAALALGHKLVAGEIRQQRMDAWRAACLQNPQGILCCARGGQRSHIVQSWLHAAGIDYPLVEGGYKALRQTAIQATIELAQKPIVLIGGCTGSGKTLLVQQQPNGVDLEGLARHRGSAFGRTLQPQLSQASFENLLAAEMLKTDARQNLRLWVLEDESRMIGSNHLPECLRERMTQAAIAVVEDPFEIRLERLNEEYFLRMHHDFTHAYGDEQGWQEYCEYLHHGLSAIKRRLGLQRYNELAARLDAALTTQLTTGSTDGHLAWLVPLLEEYYDPMYRYQLEKKAEKVVFRGEWAEVAEWVKAR.

Positions 14 to 137 constitute a Rhodanese domain; sequence LIADTPIIDV…LRQTAIQATI (124 aa). Residue Cys-97 is the S-selanylcysteine intermediate of the active site.

The protein belongs to the SelU family. As to quaternary structure, monomer.

It catalyses the reaction 5-methylaminomethyl-2-thiouridine(34) in tRNA + selenophosphate + (2E)-geranyl diphosphate + H2O + H(+) = 5-methylaminomethyl-2-selenouridine(34) in tRNA + (2E)-thiogeraniol + phosphate + diphosphate. The enzyme catalyses 5-methylaminomethyl-2-thiouridine(34) in tRNA + (2E)-geranyl diphosphate = 5-methylaminomethyl-S-(2E)-geranyl-thiouridine(34) in tRNA + diphosphate. The catalysed reaction is 5-methylaminomethyl-S-(2E)-geranyl-thiouridine(34) in tRNA + selenophosphate + H(+) = 5-methylaminomethyl-2-(Se-phospho)selenouridine(34) in tRNA + (2E)-thiogeraniol. It carries out the reaction 5-methylaminomethyl-2-(Se-phospho)selenouridine(34) in tRNA + H2O = 5-methylaminomethyl-2-selenouridine(34) in tRNA + phosphate. Functionally, involved in the post-transcriptional modification of the uridine at the wobble position (U34) of tRNA(Lys), tRNA(Glu) and tRNA(Gln). Catalyzes the conversion of 2-thiouridine (S2U-RNA) to 2-selenouridine (Se2U-RNA). Acts in a two-step process involving geranylation of 2-thiouridine (S2U) to S-geranyl-2-thiouridine (geS2U) and subsequent selenation of the latter derivative to 2-selenouridine (Se2U) in the tRNA chain. In Escherichia coli (strain K12 / MC4100 / BW2952), this protein is tRNA 2-selenouridine synthase.